We begin with the raw amino-acid sequence, 819 residues long: Protein EFR3 homolog A (819 aa).

Positions 210–230 are disordered; that stretch reads DTDSRTGPPASPTTGDKEENP.

The protein belongs to the EFR3 family. In terms of assembly, component of a phosphatidylinositol 4-kinase (PI4K) complex. Post-translationally, palmitoylated at its N-terminus, anchoring the protein to the plasma membrane.

The protein localises to the cell membrane. Component of a complex required to localize phosphatidylinositol 4-kinase (PI4K) to the plasma membrane. The complex acts as a regulator of phosphatidylinositol 4-phosphate (PtdIns(4)P) synthesis. In the complex, efr3a probably acts as the membrane-anchoring component. In Xenopus laevis (African clawed frog), this protein is Protein EFR3 homolog A (efr3a).